A 277-amino-acid polypeptide reads, in one-letter code: Putative hydro-lyase SCO1412 (277 aa).

It belongs to the D-glutamate cyclase family.

The sequence is that of Putative hydro-lyase SCO1412 from Streptomyces coelicolor (strain ATCC BAA-471 / A3(2) / M145).